We begin with the raw amino-acid sequence, 400 residues long: MTYQAPDENGFYGKFGGRFVPETLMKAVKELDEAYRASKTDPAFQKELNYYLKEYVGRETPLYFAEQLTAHAGGAKIYLKREDLNHTGAHKINNTIGQALLARQMGKQKVVAETGAGQHGVATATVAALFNMECTIFMGEEDVKRQSLNVFRMELLGAKVVSVKAGSRTLKDAVNEALRFWVANVEDTHYIMGSVLGPHPFPEIVRDYQSVIGIEARKQHLEKEGKLPDAIVACVGGGSNAMGLFYPFVDDVSVQMHGVEAAGHGLETEFHAATISKGEIGILHGAMMDVLQDENGQILEAFSISAGLDYPGIGPEHSFFRDLGRAAYHSVTDDEAVEAFQLLCRTEGIIPALESSHAISYAVKLASQMRPEESMVVCLSGRGDKDVNQLKERLEGQIND.

Position 91 is an N6-(pyridoxal phosphate)lysine (Lys91).

Belongs to the TrpB family. Tetramer of two alpha and two beta chains. Requires pyridoxal 5'-phosphate as cofactor.

The catalysed reaction is (1S,2R)-1-C-(indol-3-yl)glycerol 3-phosphate + L-serine = D-glyceraldehyde 3-phosphate + L-tryptophan + H2O. It participates in amino-acid biosynthesis; L-tryptophan biosynthesis; L-tryptophan from chorismate: step 5/5. Functionally, the beta subunit is responsible for the synthesis of L-tryptophan from indole and L-serine. The sequence is that of Tryptophan synthase beta chain from Listeria monocytogenes serotype 4b (strain CLIP80459).